The primary structure comprises 753 residues: MAAGSTTLHAVEKLQVRLATKTEPKKLEKYLQKLSALPMTADILAETGIRKTVKRLRKHQHVGDFARDLAARWKKLVLVDRNTRPGPQDPEESASRQRFGEALQDQEKAWGFPENATAPRSPSHSPEHRRTARRTPPGQQRPHPRSHSREPRAERKCPRIAPADSGRYRASPTRTAPLRMPEGPEPAAPGKQPGRGHTHAAQGGPLLCPGCQGQPQGKAVVSHSKGHKSSRQEKRPLCAQGDWHSPTLIREKSCGACLREETPRMPSWASARDRQPSDFKTDKEGGQAGSGQRVPALEEAPDSHQKRPQHSHSNKKRPSLDGRDPGNGTHGLSPEEKEQLSNDRETQEGKPPTAHLDRTSVSSLSEVEEVDMAEEFEQPTLSCEKYLTYDQLRKQKKKTGKSATTALGDKQRKANESKGTRESWDSAKKLPPVQESQSERLQAAGADSAGPKTVPSHVFSELWDLSEAWMQANYDPLSDSDSMTSQAKPEALSSPKFREEAAFPGRRVNAKMPVYSGSRPACQLQVPTLRQQCAQVLRNNPDALSDVGEVPYWVLEPVLEGWRPDQLYRRKKDNHALVRETDELRRNHCFQDFKEEKPQENKTWREQYLRLPDAPEQRLRVMTTNIRSARGNNPNGREAKMICFKSVAKTPYDTSRRQEKSAGDADPENGEIKPASKPAGSSHTPSSQSSSGGGRDSSSSILRWLPEKRANPCLSSSNEHAAPAAKTRKQAAKKVAPLMAKAIRDYKRRFSRR.

A TFIIS N-terminal domain is found at 5–80; it reads STTLHAVEKL…ARWKKLVLVD (76 aa). Disordered regions lie at residues 80-245, 261-453, and 477-497; these read DRNT…DWHS, ETPR…GPKT, and LSDSDSMTSQAKPEALSSPKF. 2 stretches are compositionally biased toward basic and acidic residues: residues 147–157 and 271–285; these read HSREPRAERKC and ARDRQPSDFKTDKEG. Positions 306–317 are enriched in basic residues; the sequence is KRPQHSHSNKKR. A compositionally biased stretch (basic and acidic residues) spans 333–348; the sequence is SPEEKEQLSNDRETQE. Over residues 366-377 the composition is skewed to acidic residues; it reads EVEEVDMAEEFE. Residues 409–428 are compositionally biased toward basic and acidic residues; it reads DKQRKANESKGTRESWDSAK. The segment at 500–659 is activation domain; the sequence is EAAFPGRRVN…TPYDTSRRQE (160 aa). Positions 528–537 are BC-box; the sequence is TLRQQCAQVL. The interval 528-537 is interacting with Elongin BC complex; it reads TLRQQCAQVL. The disordered stretch occupies residues 650-735; sequence TPYDTSRRQE…KTRKQAAKKV (86 aa). Basic and acidic residues predominate over residues 654–663; sequence TSRRQEKSAG. A compositionally biased stretch (low complexity) spans 680–700; that stretch reads GSSHTPSSQSSSGGGRDSSSS.

As to quaternary structure, heterotrimer of an A (ELOA, ELOA2 or ELOA3P), ELOB and ELOC subunit. In terms of tissue distribution, specifically expressed in testis.

The protein localises to the nucleus. SIII, also known as elongin, is a general transcription elongation factor that increases the RNA polymerase II transcription elongation past template-encoded arresting sites. Subunit A2 is transcriptionally active but its transcription activity is not enhanced by binding to the dimeric complex of the SIII regulatory subunits B and C (elongin BC complex). This is Elongin-A2 from Homo sapiens (Human).